Reading from the N-terminus, the 201-residue chain is Dephospho-CoA kinase (201 aa).

The region spanning isoleucine 3–isoleucine 201 is the DPCK domain. Glycine 11–leucine 16 is a binding site for ATP.

The protein belongs to the CoaE family.

It localises to the cytoplasm. It carries out the reaction 3'-dephospho-CoA + ATP = ADP + CoA + H(+). It participates in cofactor biosynthesis; coenzyme A biosynthesis; CoA from (R)-pantothenate: step 5/5. Catalyzes the phosphorylation of the 3'-hydroxyl group of dephosphocoenzyme A to form coenzyme A. The protein is Dephospho-CoA kinase of Ehrlichia ruminantium (strain Welgevonden).